The sequence spans 861 residues: Protein argonaute-4 (861 aa).

Residues 219 to 338 (PIIEFMCEVL…LPLEVCNIVA (120 aa)) enclose the PAZ domain. Residues 509 to 820 (LIVVILPGKT…VAFRARYHLV (312 aa)) form the Piwi domain. Residues 825–846 (DSAEGSHVSGQSNGRDPQALAK) are disordered.

The protein belongs to the argonaute family. Ago subfamily. In terms of assembly, interacts with EIF4B, IMP8, PRMT5, TNRC6A and TNRC6B. Interacts with ZFP36. In terms of processing, ubiquitinated on surface-exposed lysines by a SCF-like E3 ubiquitin-protein ligase complex containing ZSWIM8 during target-directed microRNA degradation (TDMD), a process that mediates degradation of microRNAs (miRNAs). Ubiquitination by the SCF-like E3 ubiquitin-protein ligase complex containing ZSWIM8 leads to its subsequent degradation, thereby exposing miRNAs for degradation. ZSWIM8 recognizes and binds AGO4 when it is engaged with a TDMD target.

It localises to the cytoplasm. The protein localises to the P-body. Required for RNA-mediated gene silencing (RNAi). Binds to short RNAs such as microRNAs (miRNAs) and represses the translation of mRNAs which are complementary to them. Lacks endonuclease activity and does not appear to cleave target mRNAs. The chain is Protein argonaute-4 (Ago4) from Mus musculus (Mouse).